The primary structure comprises 336 residues: G patch domain and ankyrin repeat-containing protein 1 homolog (336 aa).

ANK repeat units lie at residues 123-152 and 156-185; these read FGWT…QVET and SGNT…LEET. The region spanning 240-286 is the G-patch domain; that stretch reads AKNRGLQLMVKQGWDQEHGLGPSQSGRLYPVKTVLRKQRTGLGIEQQ.

In Drosophila melanogaster (Fruit fly), this protein is G patch domain and ankyrin repeat-containing protein 1 homolog.